The chain runs to 348 residues: Dihydroorotase (348 aa).

His14 and His16 together coordinate Zn(2+). Substrate-binding positions include 16–18 and Asn42; that span reads HLR. Residues Lys100, His137, and His175 each coordinate Zn(2+). Lys100 bears the N6-carboxylysine mark. Position 137 (His137) interacts with substrate. Leu220 is a binding site for substrate. Residue Asp248 participates in Zn(2+) binding. Asp248 is a catalytic residue. 2 residues coordinate substrate: His252 and Ala264.

It belongs to the metallo-dependent hydrolases superfamily. DHOase family. Class II DHOase subfamily. As to quaternary structure, homodimer. Requires Zn(2+) as cofactor.

It carries out the reaction (S)-dihydroorotate + H2O = N-carbamoyl-L-aspartate + H(+). It participates in pyrimidine metabolism; UMP biosynthesis via de novo pathway; (S)-dihydroorotate from bicarbonate: step 3/3. Its function is as follows. Catalyzes the reversible cyclization of carbamoyl aspartate to dihydroorotate. The polypeptide is Dihydroorotase (Pseudomonas entomophila (strain L48)).